A 403-amino-acid polypeptide reads, in one-letter code: Casein kinase II subunit alpha-2 (403 aa).

The N-terminal stretch at 1-31 is a signal peptide; it reads MHLIFFFSYFLRRYLLLLCAILILRAPLAHS. The Protein kinase domain maps to 104 to 389; sequence YEVVRKVGRG…AKEAMAHPYF (286 aa). Residues 110 to 118 and Lys133 contribute to the ATP site; that span reads VGRGKYSEV. Asn182 is a glycosylation site (N-linked (GlcNAc...) asparagine). Asp221 acts as the Proton acceptor in catalysis.

The protein belongs to the protein kinase superfamily. Ser/Thr protein kinase family. CK2 subfamily. Heterotetramer of two catalytic alpha subunits and two regulatory beta subunits. In terms of tissue distribution, seems to be present in all plant organs. But seems to be more expressed than CKA1.

The protein resides in the nucleus. It localises to the nucleolus. The enzyme catalyses L-seryl-[protein] + ATP = O-phospho-L-seryl-[protein] + ADP + H(+). It carries out the reaction L-threonyl-[protein] + ATP = O-phospho-L-threonyl-[protein] + ADP + H(+). Its function is as follows. Casein kinases are operationally defined by their preferential utilization of acidic proteins such as caseins as substrates. The alpha chain contains the catalytic site. The tetrameric holoenzyme CK2, composed of two alpha and two beta subunits, phosphorylates the transcription factor PIF1 after an exposure to light, resulting in a proteasome-dependent degradation of PIF1 and promotion of photomorphogenesis. CK2 phosphorylates translation initiation factors. May participate in the regulation of the initiation of translation. Acts as circadian clock component that maintains the correct period length through phosphorylation of CCA1. May act as an ectokinase that phosphorylates several extracellular proteins. This chain is Casein kinase II subunit alpha-2, found in Arabidopsis thaliana (Mouse-ear cress).